A 238-amino-acid chain; its full sequence is ATP synthase subunit a (238 aa).

Transmembrane regions (helical) follow at residues 17 to 37 (LSNILMITVTCVIVLLIAIIC), 80 to 100 (ITLLMFIFVANMLGLPFQIAI), 112 to 132 (DPIVTLTLAIMVLGLTHYYGI), and 194 to 214 (IFVGVLAIIPALLWQGFSIFI).

Belongs to the ATPase A chain family. F-type ATPases have 2 components, CF(1) - the catalytic core - and CF(0) - the membrane proton channel. CF(1) has five subunits: alpha(3), beta(3), gamma(1), delta(1), epsilon(1). CF(0) has three main subunits: a(1), b(2) and c(9-12). The alpha and beta chains form an alternating ring which encloses part of the gamma chain. CF(1) is attached to CF(0) by a central stalk formed by the gamma and epsilon chains, while a peripheral stalk is formed by the delta and b chains.

It localises to the cell membrane. Key component of the proton channel; it plays a direct role in the translocation of protons across the membrane. The polypeptide is ATP synthase subunit a (Listeria innocua serovar 6a (strain ATCC BAA-680 / CLIP 11262)).